The sequence spans 537 residues: Pentatricopeptide repeat-containing protein At1g02370, mitochondrial (537 aa).

The N-terminal 18 residues, 1-18 (MNFRNLIASGSRLGKRFC), are a transit peptide targeting the mitochondrion. 7 PPR repeats span residues 171-205 (HQST…NFVN), 206-240 (NSLP…GISP), 241-275 (CGVT…SEAK), 277-307 (TWNT…MEEK), 312-346 (NRDS…RPEV), 347-377 (NNLS…WESK), and 382-416 (DMRL…SKGP).

Belongs to the PPR family. P subfamily.

The protein resides in the mitochondrion. The chain is Pentatricopeptide repeat-containing protein At1g02370, mitochondrial from Arabidopsis thaliana (Mouse-ear cress).